The following is a 167-amino-acid chain: SAR-endolysin (167 aa).

A helical; Signal-anchor for type II membrane protein transmembrane segment spans residues 11–31 (VIAAISGGAIAIASVLITGPG). Catalysis depends on proton donor/acceptor residues Glu-37 and Asp-46.

It belongs to the glycosyl hydrolase 24 family.

It localises to the host cell inner membrane. The catalysed reaction is Hydrolysis of (1-&gt;4)-beta-linkages between N-acetylmuramic acid and N-acetyl-D-glucosamine residues in a peptidoglycan and between N-acetyl-D-glucosamine residues in chitodextrins.. Functionally, signal-arrest-release (SAR) endolysin with lysozyme activity that degrades host peptidoglycans and participates with the pinholin and spanin proteins in the sequential events which lead to programmed host cell lysis releasing the mature viral particles. Once the pinholin has permeabilized the host cell membrane, the SAR-endolysin is released into the periplasm where it breaks down the peptidoglycan layer. The chain is SAR-endolysin (19) from Bacteriophage PS34.